The following is a 1040-amino-acid chain: Desmoglein-4 (1040 aa).

The first 23 residues, 1–23 (MDWLLFRNICLLILFMVVLGVNS), serve as a signal peptide directing secretion. Positions 24 to 49 (EFIVEVKELDIENGTTTWQTVRRQKR) are excised as a propeptide. Cadherin domains follow at residues 50 to 157 (EWIK…PPVF), 158 to 269 (TQNV…FPIL), 270 to 385 (EKTS…GPTF), and 389 to 497 (SMTF…CPVI). Topologically, residues 50-633 (EWIKFAAACR…RQSNVGLGPA (584 aa)) are extracellular. Asparagine 110 carries an N-linked (GlcNAc...) asparagine glycan. The N-linked (GlcNAc...) asparagine glycan is linked to asparagine 545. A helical transmembrane segment spans residues 634–654 (GIGMIILGLLLLFLSPLLLLM). Residues 655 to 1040 (CCCKRRQPEG…RYSNIHYSRQ (386 aa)) are Cytoplasmic-facing. 2 Desmoglein repeat repeats span residues 883 to 909 (TLSEAEFQAEMAAASEPMIHGDIIVTE) and 910 to 940 (TYTATDPCVQPTTIVFDSQLPPNVVVTETVM). The tract at residues 1015 to 1040 (QTTRSTSPMTSQHRVTRYSNIHYSRQ) is disordered.

As to quaternary structure, interacts with JUP.

It is found in the cell membrane. The protein resides in the cell junction. Its subcellular location is the desmosome. In terms of biological role, a component of desmosome cell-cell junctions which are required for positive regulation of cellular adhesion. Coordinates the transition from proliferation to differentiation in hair follicle keratinocytes. Plays a role in moderating lymphocyte migration to inflamed skin and maintaining homeostasis of the epidermal inflammatory response. This Rattus norvegicus (Rat) protein is Desmoglein-4 (Dsg4).